A 226-amino-acid polypeptide reads, in one-letter code: Neuromodulin (226 aa).

The interval 1-226 is disordered; it reads MLCCMRRTKQ…EDPEADQEHA (226 aa). S-palmitoyl cysteine attachment occurs at residues C3 and C4. Basic and acidic residues predominate over residues 9-32; it reads KQVEKNDEDQKIEQDGVKPEDKAH. Residues 31–60 enclose the IQ domain; sequence AHKAATKIQASFRGHITRKKLKDEKKGDAP. At S41 the chain carries Phosphoserine; by PHK and PKC. Residues 51-84 show a composition bias toward basic and acidic residues; the sequence is LKDEKKGDAPAAEAEAKEKDDAPVADGVEKKEGD. Over residues 85 to 97 the composition is skewed to low complexity; that stretch reads GSATTDAAPATSP. Phosphoserine is present on residues S86 and S96. Over residues 98-127 the composition is skewed to basic and acidic residues; sequence KAEEPSKAGDAPSEEKKGEGDAAPSEEKAG. Positions 128-139 are enriched in low complexity; the sequence is SAETESAAKATT. Phosphoserine is present on residues S142, S144, and S145. Residues 146-158 are compositionally biased toward basic and acidic residues; it reads KAEDGPAKEEPKQ. A compositionally biased stretch (low complexity) spans 159 to 192; it reads ADVPAAVTDAAATTPAAEDAAKAAQPPTETAESS. T172 is subject to Phosphothreonine. Phosphoserine is present on residues S191 and S192. Positions 201–214 are enriched in basic and acidic residues; sequence VDEAKPKESARQDE. Residues 215–226 show a composition bias toward acidic residues; that stretch reads GKEDPEADQEHA.

This sequence belongs to the neuromodulin family. Identified in a complex containing FGFR4, NCAM1, CDH2, PLCG1, FRS2, SRC, SHC1, GAP43 and CTTN. Interacts (via IQ domain) with calmodulin. Binds calmodulin with a greater affinity in the absence of Ca(2+) than in its presence. In terms of processing, phosphorylated. Phosphorylation of this protein by a protein kinase C is specifically correlated with certain forms of synaptic plasticity. Palmitoylated by ZDHHC3. Palmitoylation is regulated by ARF6 and is essential for plasma membrane association and axonal and dendritic filopodia induction. Deacylated by LYPLA2. As to expression, expressed in hippocampal neurons, with highest levels of expression in the CA4 and CA3 neurons and lower levels in CA1 neurons. Expressed in the dorsal root ganglion.

It localises to the cell membrane. It is found in the cell projection. The protein resides in the growth cone. Its subcellular location is the growth cone membrane. The protein localises to the synapse. It localises to the filopodium membrane. It is found in the perikaryon. The protein resides in the dendrite. Its subcellular location is the axon. The protein localises to the cytoplasm. This protein is associated with nerve growth. It is a major component of the motile 'growth cones' that form the tips of elongating axons. Plays a role in axonal and dendritic filopodia induction. This chain is Neuromodulin (Gap43), found in Rattus norvegicus (Rat).